Consider the following 344-residue polypeptide: Dihydroorotase (344 aa).

Residues His-13 and His-15 each coordinate Zn(2+). Substrate contacts are provided by residues 15-17 (HFR) and Asn-41. Zn(2+)-binding residues include Lys-98, His-135, and His-173. Lys-98 is subject to N6-carboxylysine. His-135 is a binding site for substrate. Leu-218 is a binding site for substrate. Asp-246 contacts Zn(2+). Asp-246 is a catalytic residue. Substrate contacts are provided by His-250 and Ala-262.

This sequence belongs to the metallo-dependent hydrolases superfamily. DHOase family. Class II DHOase subfamily. As to quaternary structure, homodimer. Zn(2+) serves as cofactor.

It carries out the reaction (S)-dihydroorotate + H2O = N-carbamoyl-L-aspartate + H(+). It participates in pyrimidine metabolism; UMP biosynthesis via de novo pathway; (S)-dihydroorotate from bicarbonate: step 3/3. Catalyzes the reversible cyclization of carbamoyl aspartate to dihydroorotate. The sequence is that of Dihydroorotase from Pseudoalteromonas atlantica (strain T6c / ATCC BAA-1087).